The sequence spans 81 residues: Dermaseptin-B7 (81 aa).

Positions 1-22 (MASLKKSLFLVLFLGLVSLSIC) are cleaved as a signal peptide. Positions 23–44 (EEEKRENEDEEEQEDDEQSEMK) are excised as a propeptide. The segment at 24–48 (EEKRENEDEEEQEDDEQSEMKRGLW) is disordered. A compositionally biased stretch (acidic residues) spans 30-40 (EDEEEQEDDEQ). Val78 carries the post-translational modification Valine amide. Positions 80–81 (EQ) are excised as a propeptide.

This sequence belongs to the frog skin active peptide (FSAP) family. Dermaseptin subfamily. Expressed by the skin glands.

It is found in the secreted. Functionally, has antimicrobial activity. This chain is Dermaseptin-B7 (DRG1), found in Phyllomedusa bicolor (Two-colored leaf frog).